Reading from the N-terminus, the 152-residue chain is Syntaxin-8A (152 aa).

Low complexity predominate over residues 1–14; sequence MNNNNNFNSNFNSN. Positions 1–22 are disordered; sequence MNNNNNFNSNFNSNRISSTQPY. The Cytoplasmic segment spans residues 1 to 131; the sequence is MNNNNNFNSN…LTQQSKTTGY (131 aa). Residues 60–122 enclose the t-SNARE coiled-coil homology domain; sequence KRDMEEQDKM…RNTTKNLITL (63 aa). Residues 132-152 form a helical; Anchor for type IV membrane protein membrane-spanning segment; the sequence is CSAICFLLLVLLVIIILASVL.

This sequence belongs to the syntaxin family. In terms of assembly, component of the SNARE complex composed of syn7A, syn8A, vamp7A and vti1A.

The protein resides in the endosome membrane. Its function is as follows. Involved in the targeting and/or fusion of transport vesicles to their target membrane during transport of proteins from the early endosome to the lysosome. Required for fusion of late endosomes with lysosomes and homotypic lysosomal fusion. The sequence is that of Syntaxin-8A from Dictyostelium discoideum (Social amoeba).